A 202-amino-acid polypeptide reads, in one-letter code: HTH-type transcriptional regulator BetI 1 (202 aa).

An HTH tetR-type domain is found at 8–68; that stretch reads PIRRRQLIQA…SAMRQILWDL (61 aa). Residues 31-50 constitute a DNA-binding region (H-T-H motif); the sequence is TIARIAKRAGVSAGIISHYF.

It participates in amine and polyamine biosynthesis; betaine biosynthesis via choline pathway [regulation]. Functionally, repressor involved in the biosynthesis of the osmoprotectant glycine betaine. It represses transcription of the choline transporter BetT and the genes of BetAB involved in the synthesis of glycine betaine. This Chromohalobacter salexigens (strain ATCC BAA-138 / DSM 3043 / CIP 106854 / NCIMB 13768 / 1H11) protein is HTH-type transcriptional regulator BetI 1.